The chain runs to 265 residues: Tryptophan synthase alpha chain (265 aa).

Residues E49 and D60 each act as proton acceptor in the active site.

This sequence belongs to the TrpA family. In terms of assembly, tetramer of two alpha and two beta chains.

It catalyses the reaction (1S,2R)-1-C-(indol-3-yl)glycerol 3-phosphate + L-serine = D-glyceraldehyde 3-phosphate + L-tryptophan + H2O. Its pathway is amino-acid biosynthesis; L-tryptophan biosynthesis; L-tryptophan from chorismate: step 5/5. Its function is as follows. The alpha subunit is responsible for the aldol cleavage of indoleglycerol phosphate to indole and glyceraldehyde 3-phosphate. This chain is Tryptophan synthase alpha chain, found in Desulfosudis oleivorans (strain DSM 6200 / JCM 39069 / Hxd3) (Desulfococcus oleovorans).